The sequence spans 178 residues: Large ribosomal subunit protein uL6 (178 aa).

This sequence belongs to the universal ribosomal protein uL6 family. Part of the 50S ribosomal subunit.

This protein binds to the 23S rRNA, and is important in its secondary structure. It is located near the subunit interface in the base of the L7/L12 stalk, and near the tRNA binding site of the peptidyltransferase center. The polypeptide is Large ribosomal subunit protein uL6 (Methanobrevibacter smithii (strain ATCC 35061 / DSM 861 / OCM 144 / PS)).